Reading from the N-terminus, the 71-residue chain is Small ribosomal subunit protein bS18 (71 aa).

This sequence belongs to the bacterial ribosomal protein bS18 family. Part of the 30S ribosomal subunit. Forms a tight heterodimer with protein bS6.

Its function is as follows. Binds as a heterodimer with protein bS6 to the central domain of the 16S rRNA, where it helps stabilize the platform of the 30S subunit. The chain is Small ribosomal subunit protein bS18 from Dichelobacter nodosus (strain VCS1703A).